Reading from the N-terminus, the 86-residue chain is Collagen alpha-1(XII) chain (86 aa).

Pro residues predominate over residues asparagine 1–proline 12. Positions asparagine 1 to arginine 86 are disordered. A hydroxyproline mark is found at proline 6, proline 9, proline 12, proline 18, proline 24, proline 27, proline 30, proline 42, proline 51, proline 54, proline 65, proline 74, proline 77, and proline 80. Positions glycine 16–glycine 25 are enriched in gly residues. The segment covering proline 35–leucine 50 has biased composition (low complexity). A compositionally biased stretch (low complexity) spans glutamine 57 to arginine 71.

It belongs to the fibril-associated collagens with interrupted helices (FACIT) family. As to quaternary structure, trimer of identical chains each containing 190 kDa of non-triple-helical sequences. Post-translationally, the triple-helical tail is stabilized by disulfide bonds at each end. Prolines at the third position of the tripeptide repeating unit (G-X-Y) are hydroxylated in some or all of the chains.

It is found in the secreted. It localises to the extracellular space. The protein resides in the extracellular matrix. Functionally, type XII collagen interacts with type I collagen-containing fibrils, the COL1 domain could be associated with the surface of the fibrils, and the COL2 and NC3 domains may be localized in the perifibrillar matrix. The chain is Collagen alpha-1(XII) chain (COL12A1) from Bos taurus (Bovine).